The sequence spans 250 residues: Pyrroloquinoline-quinone synthase (250 aa).

This sequence belongs to the PqqC family.

The enzyme catalyses 6-(2-amino-2-carboxyethyl)-7,8-dioxo-1,2,3,4,7,8-hexahydroquinoline-2,4-dicarboxylate + 3 O2 = pyrroloquinoline quinone + 2 H2O2 + 2 H2O + H(+). The protein operates within cofactor biosynthesis; pyrroloquinoline quinone biosynthesis. Functionally, ring cyclization and eight-electron oxidation of 3a-(2-amino-2-carboxyethyl)-4,5-dioxo-4,5,6,7,8,9-hexahydroquinoline-7,9-dicarboxylic-acid to PQQ. The protein is Pyrroloquinoline-quinone synthase of Ectopseudomonas mendocina (strain ymp) (Pseudomonas mendocina).